A 367-amino-acid chain; its full sequence is B2 bradykinin receptor (367 aa).

The Extracellular portion of the chain corresponds to 1-36; that stretch reads MLNLTSQVPEPALNGTLPQSSSCFHSDWWNWLNTIQ. Residues Asn3 and Asn14 are each glycosylated (N-linked (GlcNAc...) asparagine). The chain crosses the membrane as a helical span at residues 37-60; sequence APFLWVLFLLAALENIFVLSVFCL. At 61–69 the chain is on the cytoplasmic side; sequence HKNSCTVAE. Residues 70 to 94 traverse the membrane as a helical segment; that stretch reads IYLGNLAMADLILALGLPFWAITIA. Residues 95–107 are Extracellular-facing; that stretch reads NHFDWLFGEVLCR. The cysteines at positions 106 and 187 are disulfide-linked. Residues 108–129 form a helical membrane-spanning segment; it reads VVNTMIYMNLYSSICFLMLVSI. At 130–151 the chain is on the cytoplasmic side; the sequence is DRYLALVKTMSMGRMRGVRWAK. Tyr132 carries the post-translational modification Phosphotyrosine. Residues 152–174 form a helical membrane-spanning segment; sequence LYSLVIWGCTLLLSSPMLAFRTM. At 175 to 197 the chain is on the extracellular side; that stretch reads HEYAAEGHNVTACIIKYPSRSWM. A glycan (N-linked (GlcNAc...) asparagine) is linked at Asn183. Residues 198 to 224 traverse the membrane as a helical segment; it reads VFTNILLNSVGFLLPLSIITYCTVQIL. Topologically, residues 225-243 are cytoplasmic; it reads QVLRNNEMQKFKEIQTERK. The chain crosses the membrane as a helical span at residues 244-268; the sequence is ATVLVLAVLLLFVVCWLPFQISTFL. Residues 269–287 are Extracellular-facing; sequence DTLLRLGVLSGCWDEHAVD. The helical transmembrane segment at 288-311 threads the bilayer; that stretch reads VITQISSYVAYSNSGLNPLVYVIV. At 312 to 367 the chain is on the cytoplasmic side; sequence GKRFRKKSREVYRVLCQKGGCMGEPVQMENSMGTLRTSISVERQIHKLQDWAGKKQ. The residue at position 323 (Tyr323) is a Phosphotyrosine. A lipid anchor (S-palmitoyl cysteine) is attached at Cys327. A Phosphoserine modification is found at Ser342. Residue Thr345 is modified to Phosphothreonine. 2 positions are modified to phosphoserine; by GRK6: Ser349 and Ser351.

Belongs to the G-protein coupled receptor 1 family. Bradykinin receptor subfamily. BDKRB2 sub-subfamily. Forms a complex with PECAM1 and GNAQ. Interacts with PECAM1.

Its subcellular location is the cell membrane. Its function is as follows. Receptor for bradykinin. It is associated with G proteins that activate a phosphatidylinositol-calcium second messenger system. The sequence is that of B2 bradykinin receptor (BDKRB2) from Sus scrofa (Pig).